The following is a 68-amino-acid chain: UPF0253 protein VF_0662 (68 aa).

It belongs to the UPF0253 family.

This Aliivibrio fischeri (strain ATCC 700601 / ES114) (Vibrio fischeri) protein is UPF0253 protein VF_0662.